We begin with the raw amino-acid sequence, 263 residues long: 4-hydroxy-2-oxo-heptane-1,7-dioate aldolase (263 aa).

Residue histidine 45 is the Proton acceptor of the active site. Glutamine 147 contacts substrate. An a divalent metal cation-binding site is contributed by glutamate 149. Positions 174 and 175 each coordinate substrate. Aspartate 175 contacts a divalent metal cation.

This sequence belongs to the HpcH/HpaI aldolase family. In terms of assembly, homohexamer; trimer of dimers. A divalent metal cation is required as a cofactor.

It catalyses the reaction 4-hydroxy-2-oxoheptanedioate = succinate semialdehyde + pyruvate. The protein operates within aromatic compound metabolism; 4-hydroxyphenylacetate degradation; pyruvate and succinate semialdehyde from 4-hydroxyphenylacetate: step 7/7. Functionally, catalyzes the reversible retro-aldol cleavage of 4-hydroxy-2-ketoheptane-1,7-dioate (HKHD) to pyruvate and succinic semialdehyde. This is 4-hydroxy-2-oxo-heptane-1,7-dioate aldolase from Salmonella dublin (strain CT_02021853).